The primary structure comprises 992 residues: GATOR2 complex protein WDR59 (992 aa).

7 WD repeats span residues 57–98 (QSKW…GEVG), 103–143 (GHTR…KPTV), 146–185 (SAVA…TAVE), 189–229 (AHLS…KYLN), 232–276 (PCQV…APVH), 278–318 (FVGH…RVDY), and 319–362 (QMQR…SLSH). Residues 343–373 (PEPEKTPHPQDIDHQPSLSHGEEDAIKEDPP) are disordered. Basic and acidic residues predominate over residues 344–373 (EPEKTPHPQDIDHQPSLSHGEEDAIKEDPP). Positions 393-494 (QEFSLINVQI…RQLVSCLESF (102 aa)) constitute an RWD domain. Ser-564 is modified (phosphoserine). A WD 8 repeat occupies 660-706 (KSLGELYILNVNDTQETCQKNATSAMLVGRKDLVQVWSLATVATDLC). Phosphoserine occurs at positions 839, 840, and 848. A disordered region spans residues 849–870 (LTYSDPRERERDQHDKNKRLLD). Residues 853–869 (DPRERERDQHDKNKRLL) show a composition bias toward basic and acidic residues. The C4-type zinc finger occupies 919–939 (YCSHCRSEVRGTQCAICKGFT). Positions 920, 923, 932, 935, 945, 956, 961, 964, 967, 978, 982, 984, and 986 each coordinate Zn(2+). An RING-type; atypical zinc finger spans residues 940–989 (FQCAICHVAVRGSSNFCLTCGHGGHTSHMMEWFRTQEVCPTGCGCHCLLE).

The protein belongs to the WD repeat WDR59 family. In terms of assembly, component of the GATOR2 subcomplex, composed of MIOS, SEC13, SEH1L, WDR24 and WDR59. The GATOR2 complex interacts with CASTOR1 and CASTOR2; the interaction is negatively regulated by arginine. The GATOR2 complex interacts with SESN1, SESN2 and SESN3; the interaction is negatively regulated by amino acids. Interacts with DDB1-CUL4A/B E3 ligase complexes.

It localises to the lysosome membrane. With respect to regulation, the GATOR2 complex is negatively regulated by the upstream amino acid sensors CASTOR1 and SESN2, which sequester the GATOR2 complex in absence of amino acids. In the presence of abundant amino acids, GATOR2 is released from CASTOR1 and SESN2 and activated. Its function is as follows. As a component of the GATOR2 complex, functions as an activator of the amino acid-sensing branch of the mTORC1 signaling pathway. The GATOR2 complex indirectly activates mTORC1 through the inhibition of the GATOR1 subcomplex. GATOR2 probably acts as an E3 ubiquitin-protein ligase toward GATOR1. In the presence of abundant amino acids, the GATOR2 complex mediates ubiquitination of the NPRL2 core component of the GATOR1 complex, leading to GATOR1 inactivation. In the absence of amino acids, GATOR2 is inhibited, activating the GATOR1 complex. The protein is GATOR2 complex protein WDR59 of Mus musculus (Mouse).